The primary structure comprises 197 residues: Xanthine phosphoribosyltransferase (197 aa).

Xanthine contacts are provided by leucine 20 and asparagine 27. 5-phospho-alpha-D-ribose 1-diphosphate is bound at residue 128-132 (ANGQA). Lysine 156 is a binding site for xanthine.

It belongs to the purine/pyrimidine phosphoribosyltransferase family. Xpt subfamily. As to quaternary structure, homodimer.

It localises to the cytoplasm. It catalyses the reaction XMP + diphosphate = xanthine + 5-phospho-alpha-D-ribose 1-diphosphate. It functions in the pathway purine metabolism; XMP biosynthesis via salvage pathway; XMP from xanthine: step 1/1. Its function is as follows. Converts the preformed base xanthine, a product of nucleic acid breakdown, to xanthosine 5'-monophosphate (XMP), so it can be reused for RNA or DNA synthesis. The chain is Xanthine phosphoribosyltransferase from Bacillus cytotoxicus (strain DSM 22905 / CIP 110041 / 391-98 / NVH 391-98).